We begin with the raw amino-acid sequence, 530 residues long: MAGGVVVNNGGGKDYPGKLTMFVLFACIVAATGGLIFGYDIGISGGVTSMNPFLIKFFPSVYRKEQAAEKNQSNQYCKFDSPLLTMFTSSLYLAALVASFFASTVTRVAGRKWSMFGGGVTFLVGAALNGAAKNVLMLILGRVLLGVGVGFANQSVPLYLSEMAPARLRGMLNIGFQLMITIGILCANLINYGTAKIKGGWGWRVSLALAAVPAAIIAVGALFLPDTPNSLIDRGHTDAAKRMLRRVRGTDDIEEEYNDLVAASEESKLVAHPWRNILQRRYRPQLTMAIAIPLFQQLTGINVIMFYAPVLFKTLGFADDASLMSAVITGLVNVFATFVSIVTVDRLGRRKLFLQGGTQMLACQIVVGSLIGAKFGFSGVADIPKAYAAFVVLFICAYVAGFAWSWGPLGWLVPSEIFPLEIRSAGQSINVSVNMLFTFIIAQAFLPMLCRFKFILFFFFGAWVVIMTLFVAFFLPETKNVPIEEMVLVWKSHWYWGRFIRDEDVHVGADVEMPAAGNRNGKVDPAKLAN.

The Cytoplasmic portion of the chain corresponds to 1–18 (MAGGVVVNNGGGKDYPGK). A helical transmembrane segment spans residues 19-39 (LTMFVLFACIVAATGGLIFGY). The Extracellular segment spans residues 40–81 (DIGISGGVTSMNPFLIKFFPSVYRKEQAAEKNQSNQYCKFDS). Residues 82 to 102 (PLLTMFTSSLYLAALVASFFA) form a helical membrane-spanning segment. Residues 103–119 (STVTRVAGRKWSMFGGG) are Cytoplasmic-facing. Residues 120 to 140 (VTFLVGAALNGAAKNVLMLIL) traverse the membrane as a helical segment. Residues 141 to 142 (GR) are Extracellular-facing. The helical transmembrane segment at 143–163 (VLLGVGVGFANQSVPLYLSEM) threads the bilayer. At 164–169 (APARLR) the chain is on the cytoplasmic side. The helical transmembrane segment at 170-190 (GMLNIGFQLMITIGILCANLI) threads the bilayer. Residues 191-204 (NYGTAKIKGGWGWR) lie on the Extracellular side of the membrane. The chain crosses the membrane as a helical span at residues 205–225 (VSLALAAVPAAIIAVGALFLP). The Cytoplasmic portion of the chain corresponds to 226–291 (DTPNSLIDRG…YRPQLTMAIA (66 aa)). Residues 292–312 (IPLFQQLTGINVIMFYAPVLF) traverse the membrane as a helical segment. Topologically, residues 313-323 (KTLGFADDASL) are extracellular. A helical transmembrane segment spans residues 324 to 344 (MSAVITGLVNVFATFVSIVTV). Topologically, residues 345 to 359 (DRLGRRKLFLQGGTQ) are cytoplasmic. Residues 360 to 380 (MLACQIVVGSLIGAKFGFSGV) form a helical membrane-spanning segment. The Extracellular segment spans residues 381-388 (ADIPKAYA). The chain crosses the membrane as a helical span at residues 389-409 (AFVVLFICAYVAGFAWSWGPL). The Cytoplasmic portion of the chain corresponds to 410-428 (GWLVPSEIFPLEIRSAGQS). Residues 429 to 449 (INVSVNMLFTFIIAQAFLPML) traverse the membrane as a helical segment. Residues 450–453 (CRFK) are Extracellular-facing. The helical transmembrane segment at 454-474 (FILFFFFGAWVVIMTLFVAFF) threads the bilayer. Residues 475-530 (LPETKNVPIEEMVLVWKSHWYWGRFIRDEDVHVGADVEMPAAGNRNGKVDPAKLAN) are Cytoplasmic-facing.

This sequence belongs to the major facilitator superfamily. Sugar transporter (TC 2.A.1.1) family. Expressed in leaf blades, leaf sheaths, anthers, ovaries and embryos. Expressed at low levels in roots and shoots.

It is found in the cell membrane. Functionally, mediates active uptake of hexoses by sugar:proton symport. Can transport glucose, fructose, mannose, galactose, xylose and ribose. In Oryza sativa subsp. japonica (Rice), this protein is Sugar transport protein MST6.